An 86-amino-acid polypeptide reads, in one-letter code: Small ribosomal subunit protein bS16 (86 aa).

The protein belongs to the bacterial ribosomal protein bS16 family.

In Methylacidiphilum infernorum (isolate V4) (Methylokorus infernorum (strain V4)), this protein is Small ribosomal subunit protein bS16.